The chain runs to 249 residues: DNA repair protein RecO (249 aa).

The protein belongs to the RecO family.

Its function is as follows. Involved in DNA repair and RecF pathway recombination. This Leptospira biflexa serovar Patoc (strain Patoc 1 / Ames) protein is DNA repair protein RecO.